The sequence spans 420 residues: Serine hydroxymethyltransferase (420 aa).

Residues Leu121 and 125-127 each bind (6S)-5,6,7,8-tetrahydrofolate; that span reads GHL. Lys229 is modified (N6-(pyridoxal phosphate)lysine).

This sequence belongs to the SHMT family. In terms of assembly, homodimer. The cofactor is pyridoxal 5'-phosphate.

It localises to the cytoplasm. It catalyses the reaction (6R)-5,10-methylene-5,6,7,8-tetrahydrofolate + glycine + H2O = (6S)-5,6,7,8-tetrahydrofolate + L-serine. The protein operates within one-carbon metabolism; tetrahydrofolate interconversion. It participates in amino-acid biosynthesis; glycine biosynthesis; glycine from L-serine: step 1/1. Functionally, catalyzes the reversible interconversion of serine and glycine with tetrahydrofolate (THF) serving as the one-carbon carrier. This reaction serves as the major source of one-carbon groups required for the biosynthesis of purines, thymidylate, methionine, and other important biomolecules. Also exhibits THF-independent aldolase activity toward beta-hydroxyamino acids, producing glycine and aldehydes, via a retro-aldol mechanism. The protein is Serine hydroxymethyltransferase of Glaesserella parasuis serovar 5 (strain SH0165) (Haemophilus parasuis).